We begin with the raw amino-acid sequence, 334 residues long: Heat shock factor 2-binding protein (334 aa).

Residues 14 to 51 form an interaction with BRME1 region; it reads MGTKEEFVKVRKKDLERLTTEVMQIRDFLPRILNGEVL. A coiled-coil region spans residues 49-122; that stretch reads EVLESFQKLK…LLQQAEYCTE (74 aa). The tract at residues 83–334 is interaction with BRCA2; sequence ARLETVQADN…EDLRTLEHNV (252 aa).

As to quaternary structure, associates with HSF2. The interaction seems to occur between the trimerization domain of HSF2 and the N-terminal hydrophilic region of HSF2BP. Interacts (via C-terminus) with BNC1. Interacts (via N-terminus) with BRCA2 and BRME1; the interactions are direct and allow the formation of a ternary complex. The complex BRME1:HSF2BP:BRCA2 interacts with SPATA22, MEIOB and RAD51. Post-translationally, sumoylated by UBE2I in response to MEKK1-mediated stimuli. In terms of tissue distribution, testis specific. Overexpressed in some tumors.

The protein resides in the cytoplasm. It localises to the chromosome. Meiotic recombination factor component of recombination bridges involved in meiotic double-strand break repair. Modulates the localization of recombinases DMC1:RAD51 to meiotic double-strand break (DSB) sites through the interaction with BRCA2 and its recruitment during meiotic recombination. Indispensable for the DSB repair, homologous synapsis, and crossover formation that are needed for progression past metaphase I, is essential for spermatogenesis and male fertility. Required for proper recombinase recruitment in female meiosis. Inhibits BNC1 transcriptional activity during spermatogenesis, probably by sequestering it in the cytoplasm. May be involved in modulating HSF2 activation in testis. This chain is Heat shock factor 2-binding protein, found in Homo sapiens (Human).